Consider the following 208-residue polypeptide: NAD(P)H-hydrate epimerase (208 aa).

The YjeF N-terminal domain occupies 11 to 208; sequence MRAKDQFTIN…VIVADDMGTY (198 aa). Position 59–63 (59–63) interacts with (6S)-NADPHX; sequence NNGGD. K(+) contacts are provided by N60 and D122. (6S)-NADPHX-binding positions include 126–132, Y137, and D155; that span reads GIGIDRP. S158 provides a ligand contact to K(+).

Belongs to the NnrE/AIBP family. K(+) is required as a cofactor.

It catalyses the reaction (6R)-NADHX = (6S)-NADHX. It carries out the reaction (6R)-NADPHX = (6S)-NADPHX. Catalyzes the epimerization of the S- and R-forms of NAD(P)HX, a damaged form of NAD(P)H that is a result of enzymatic or heat-dependent hydration. This is a prerequisite for the S-specific NAD(P)H-hydrate dehydratase to allow the repair of both epimers of NAD(P)HX. This chain is NAD(P)H-hydrate epimerase, found in Limosilactobacillus fermentum (strain NBRC 3956 / LMG 18251) (Lactobacillus fermentum).